Consider the following 269-residue polypeptide: Hydroxyethylthiazole kinase (269 aa).

Substrate is bound at residue Met-42. Positions 118 and 164 each coordinate ATP. Gly-191 contributes to the substrate binding site.

Belongs to the Thz kinase family. Mg(2+) is required as a cofactor.

It carries out the reaction 5-(2-hydroxyethyl)-4-methylthiazole + ATP = 4-methyl-5-(2-phosphooxyethyl)-thiazole + ADP + H(+). It functions in the pathway cofactor biosynthesis; thiamine diphosphate biosynthesis; 4-methyl-5-(2-phosphoethyl)-thiazole from 5-(2-hydroxyethyl)-4-methylthiazole: step 1/1. Its function is as follows. Catalyzes the phosphorylation of the hydroxyl group of 4-methyl-5-beta-hydroxyethylthiazole (THZ). The polypeptide is Hydroxyethylthiazole kinase (Listeria monocytogenes serovar 1/2a (strain ATCC BAA-679 / EGD-e)).